The sequence spans 565 residues: Sulfite reductase [NADPH] hemoprotein beta-component (565 aa).

The [4Fe-4S] cluster site is built by Cys429, Cys435, Cys474, and Cys478. Cys478 contacts siroheme.

Belongs to the nitrite and sulfite reductase 4Fe-4S domain family. As to quaternary structure, alpha(8)-beta(8). The alpha component is a flavoprotein, the beta component is a hemoprotein. The cofactor is siroheme. Requires [4Fe-4S] cluster as cofactor.

The enzyme catalyses hydrogen sulfide + 3 NADP(+) + 3 H2O = sulfite + 3 NADPH + 4 H(+). It participates in sulfur metabolism; hydrogen sulfide biosynthesis; hydrogen sulfide from sulfite (NADPH route): step 1/1. In terms of biological role, component of the sulfite reductase complex that catalyzes the 6-electron reduction of sulfite to sulfide. This is one of several activities required for the biosynthesis of L-cysteine from sulfate. The chain is Sulfite reductase [NADPH] hemoprotein beta-component from Pseudoalteromonas translucida (strain TAC 125).